A 1826-amino-acid chain; its full sequence is ATPase family AAA domain-containing protein 5 (1826 aa).

S44 is subject to Phosphoserine. K127 is covalently cross-linked (Glycyl lysine isopeptide (Lys-Gly) (interchain with G-Cter in SUMO2)). Disordered stretches follow at residues S170–D254, P282–S311, A323–N367, Q398–S572, R588–S623, K647–N684, and V709–E729. S215 is modified (phosphoserine). Basic and acidic residues predominate over residues N243–D254. A compositionally biased stretch (low complexity) spans S298–S311. 2 positions are modified to phosphoserine: S351 and S366. The interval K365–E381 is interaction with WDR48. Positions K418 to I442 are enriched in basic and acidic residues. Residues P445–L456 show a composition bias toward polar residues. Basic and acidic residues predominate over residues H459–E468. A compositionally biased stretch (basic residues) spans K469–R481. Over residues N487 to Q505 the composition is skewed to basic and acidic residues. The span at D540–T559 shows a compositional bias: polar residues. Phosphoserine occurs at positions 591 and 603. Phosphoserine occurs at positions 727 and 801. The disordered stretch occupies residues G965–T1034. The segment covering E1006 to I1019 has biased composition (basic and acidic residues). S1104 is subject to Phosphoserine. Position 1119-1126 (G1119–T1126) interacts with ATP. The segment at Y1183–K1216 is disordered. An LXCXE motif motif is present at residues L1415–E1419. 2 disordered regions span residues P1527–K1552 and S1592–P1611. An interaction with RAD51 and RFC5 region spans residues P1612 to E1701.

The protein belongs to the AAA ATPase family. In terms of assembly, component of a heteropentameric replication factor ATAD5 RFC-like complex composed of one large subunit (ATAD5) and four small subunits (RFC2, RFC3, RFC4 and RFC5). Within the ATAD5 RFC-like complex, interacts with RFC2, RFC4 and RFC5. Within the ATAD5 RFC-like complex, interacts directly via-N terminal with RAD51; the interactions is enhanced under replication stress. Interacts with RB1 predominantly in G1 phase via its LXCXE motif. Interacts with RAD9A in growing cells. The interaction with RAD9A is reduced after exposure to DNA replication-inhibiting agents. Interacts with BRD4. Interacts with PCNA. Interacts with deubiquitinating enzyme USP1, and its associated factor, WDR48. ATR may stimulate the RAD9A dissociation. In terms of tissue distribution, expressed ubiquitously in all cell lines like teratocarcinoma, cell lymphoma, lymphoma.

The protein localises to the nucleus. Functionally, has an important role in DNA replication and in maintaining genome integrity during replication stress. Involved in a RAD9A-related damage checkpoint, a pathway that is important in determining whether DNA damage is compatible with cell survival or whether it requires cell elimination by apoptosis. Modulates the RAD9A interaction with BCL2 and thereby induces DNA damage-induced apoptosis. Promotes PCNA deubiquitination by recruiting the ubiquitin-specific protease 1 (USP1) and WDR48 thereby down-regulating the error-prone damage bypass pathway. As component of the ATAD5 RFC-like complex, regulates the function of the DNA polymerase processivity factor PCNA by unloading the ring-shaped PCNA homotrimer from DNA after replication during the S phase of the cell cycle. This seems to be dependent on its ATPase activity. Plays important roles in restarting stalled replication forks under replication stress, by unloading the PCNA homotrimer from DNA and recruiting RAD51 possibly through an ATR-dependent manner. Ultimately this enables replication fork regression, breakage, and eventual fork restart. Both the PCNA unloading activity and the interaction with WDR48 are required to efficiently recruit RAD51 to stalled replication forks. Promotes the generation of MUS81-mediated single-stranded DNA-associated breaks in response to replication stress, which is an alternative pathway to restart stalled/regressed replication forks. In Mus musculus (Mouse), this protein is ATPase family AAA domain-containing protein 5 (Atad5).